A 350-amino-acid polypeptide reads, in one-letter code: UPF0284 protein MJ1598 (350 aa).

The protein belongs to the UPF0284 family.

This chain is UPF0284 protein MJ1598, found in Methanocaldococcus jannaschii (strain ATCC 43067 / DSM 2661 / JAL-1 / JCM 10045 / NBRC 100440) (Methanococcus jannaschii).